The sequence spans 412 residues: Argininosuccinate synthase (412 aa).

ATP-binding positions include 15 to 23 and alanine 42; that span reads AYSGGLDTS. Tyrosine 93 and serine 98 together coordinate L-citrulline. Glycine 123 is an ATP binding site. The L-aspartate site is built by threonine 125, asparagine 129, and aspartate 130. Position 129 (asparagine 129) interacts with L-citrulline. L-citrulline is bound by residues arginine 133, serine 185, serine 194, glutamate 270, and tyrosine 282.

This sequence belongs to the argininosuccinate synthase family. Type 1 subfamily. In terms of assembly, homotetramer.

The protein localises to the cytoplasm. The enzyme catalyses L-citrulline + L-aspartate + ATP = 2-(N(omega)-L-arginino)succinate + AMP + diphosphate + H(+). It functions in the pathway amino-acid biosynthesis; L-arginine biosynthesis; L-arginine from L-ornithine and carbamoyl phosphate: step 2/3. This chain is Argininosuccinate synthase, found in Psychrobacter cryohalolentis (strain ATCC BAA-1226 / DSM 17306 / VKM B-2378 / K5).